The following is a 295-amino-acid chain: Glutamyl-Q tRNA(Asp) synthetase (295 aa).

L-glutamate-binding positions include 5–9 (RFAPS) and glutamate 41. A 'HIGH' region motif is present at residues 8 to 18 (PSPTGLLHIGS). Zn(2+) contacts are provided by cysteine 97, cysteine 99, tyrosine 117, and cysteine 121. The L-glutamate site is built by tyrosine 178 and arginine 196. Residues 234–238 (KWSKQ) carry the 'KMSKS' region motif. Lysine 237 serves as a coordination point for ATP.

It belongs to the class-I aminoacyl-tRNA synthetase family. GluQ subfamily. Requires Zn(2+) as cofactor.

Functionally, catalyzes the tRNA-independent activation of glutamate in presence of ATP and the subsequent transfer of glutamate onto a tRNA(Asp). Glutamate is transferred on the 2-amino-5-(4,5-dihydroxy-2-cyclopenten-1-yl) moiety of the queuosine in the wobble position of the QUC anticodon. The chain is Glutamyl-Q tRNA(Asp) synthetase from Neisseria gonorrhoeae (strain ATCC 700825 / FA 1090).